Here is a 118-residue protein sequence, read N- to C-terminus: NLIQFKSIIECANRGSRRWLDYADYGCYCGWGGSGTPVDELDRCCKVHDECYGEAVKQGCFPKLTVYSWKCTENVPICDSRSKCKDFVCACDAAAAKCFAKAPYNKDNYNIDTKTRCQ.

Disulfide bonds link C11–C71, C27–C117, C29–C45, C44–C98, C51–C91, C60–C84, and C78–C89. Y28, G30, and G32 together coordinate Ca(2+). H48 is an active-site residue. D49 serves as a coordination point for Ca(2+). D92 is an active-site residue.

The protein belongs to the phospholipase A2 family. Group I subfamily. D49 sub-subfamily. The cofactor is Ca(2+). As to expression, expressed by the venom gland.

It localises to the secreted. The enzyme catalyses a 1,2-diacyl-sn-glycero-3-phosphocholine + H2O = a 1-acyl-sn-glycero-3-phosphocholine + a fatty acid + H(+). PLA2 catalyzes the calcium-dependent hydrolysis of the 2-acyl groups in 3-sn-phosphoglycerides. This Pseudechis australis (Mulga snake) protein is Basic phospholipase A2 PA-9C.